The sequence spans 204 residues: Large ribosomal subunit protein eL15 (204 aa).

This sequence belongs to the eukaryotic ribosomal protein eL15 family. As to quaternary structure, component of the large ribosomal subunit.

Its subcellular location is the cytoplasm. Its function is as follows. Component of the large ribosomal subunit. The ribosome is a large ribonucleoprotein complex responsible for the synthesis of proteins in the cell. In Paramisgurnus dabryanus, this protein is Large ribosomal subunit protein eL15 (rpl15).